The sequence spans 278 residues: Large ribosomal subunit protein uL2 (278 aa).

The disordered stretch occupies residues 218-278 (RPHNRGVVMN…IMRSRHQRKK (61 aa)).

The protein belongs to the universal ribosomal protein uL2 family. In terms of assembly, part of the 50S ribosomal subunit. Forms a bridge to the 30S subunit in the 70S ribosome.

In terms of biological role, one of the primary rRNA binding proteins. Required for association of the 30S and 50S subunits to form the 70S ribosome, for tRNA binding and peptide bond formation. It has been suggested to have peptidyltransferase activity; this is somewhat controversial. Makes several contacts with the 16S rRNA in the 70S ribosome. In Rhizobium etli (strain CIAT 652), this protein is Large ribosomal subunit protein uL2.